A 378-amino-acid polypeptide reads, in one-letter code: Leukosialin (378 aa).

A signal peptide spans Trp-1–Gln-7. Residues Glu-8–Gly-231 lie on the Extracellular side of the membrane. Residues Thr-13, Thr-15, and Thr-20 are each glycosylated (O-linked (GalNAc...) threonine). The interval Thr-13–Ser-33 is disordered. Ser-23, Ser-25, and Ser-27 each carry an O-linked (GalNAc...) serine glycan. Thr-28 carries an O-linked (GalNAc...) threonine glycan. Residues Ser-29 and Ser-33 are each glycosylated (O-linked (GalNAc...) serine). Thr-34 is a glycosylation site (O-linked (GalNAc...) threonine). Ser-36 and Ser-37 each carry an O-linked (GalNAc...) serine glycan. Thr-40 is a glycosylation site (O-linked (GalNAc...) threonine). Ser-108 and Ser-113 each carry an O-linked (GalNAc...) serine glycan. Residues Thr-118, Thr-120, and Thr-124 are each glycosylated (O-linked (GalNAc...) threonine). O-linked (GalNAc...) serine glycosylation is found at Ser-125 and Ser-126. Residue Thr-174 is glycosylated (O-linked (GalNAc...) threonine). Residues Ser-176 and Ser-180 are each glycosylated (O-linked (GalNAc...) serine). Thr-183 carries an O-linked (GalNAc...) threonine glycan. Residue Ser-187 is glycosylated (O-linked (GalNAc...) serine). A glycan (O-linked (GalNAc...) threonine) is linked at Thr-189. A helical transmembrane segment spans residues Met-232–Trp-254. The interval Arg-255–Arg-285 is required for interaction with EZR, MSN and RDX and for co-localization to microvilli. Residues Arg-255–Leu-378 lie on the Cytoplasmic side of the membrane. Positions Lys-259–Arg-273 match the Nuclear localization signal motif. A disordered region spans residues Leu-265–Leu-378. Ser-268 carries the post-translational modification Phosphoserine. Position 276 is a phosphothreonine (Thr-276). Residues Gly-310–Phe-321 are compositionally biased toward polar residues. Ser-311 carries the post-translational modification Phosphoserine. Thr-316 is subject to Phosphothreonine. Phosphoserine is present on residues Ser-322 and Ser-326. Ser-330 is modified (phosphoserine; by PKC/PRKCQ). Ser-354 is subject to Phosphoserine. The residue at position 361 (Thr-361) is a Phosphothreonine.

Interacts with SIGLEC1. In terms of assembly, monomer. Interacts with CTNNB1. Interacts with EZR, MSN and RDX (via FERM domain). Post-translationally, has a high content of sialic acid and O-linked carbohydrate structures. In terms of processing, phosphorylation at Ser-330 is regulated by chemokines, requires its association with ERM proteins (EZR, RDX and MSN) and is essential for its function in the regulation of T-cell trafficking to lymph nodes. Cleavage by CTSG releases its extracellular domain and triggers its intramembrane proteolysis by gamma-secretase releasing the CD43 cytoplasmic tail chain (CD43-ct) which translocates to the nucleus. Post-translationally, sumoylated. Cell surface of thymocytes, T-lymphocytes, neutrophils, plasma cells and myelomas.

The protein resides in the membrane. It localises to the cell projection. The protein localises to the microvillus. Its subcellular location is the uropodium. It is found in the nucleus. The protein resides in the PML body. Predominant cell surface sialoprotein of leukocytes which regulates multiple T-cell functions, including T-cell activation, proliferation, differentiation, trafficking and migration. Positively regulates T-cell trafficking to lymph-nodes via its association with ERM proteins (EZR, RDX and MSN). Negatively regulates Th2 cell differentiation and predisposes the differentiation of T-cells towards a Th1 lineage commitment. Promotes the expression of IFN-gamma by T-cells during T-cell receptor (TCR) activation of naive cells and induces the expression of IFN-gamma by CD4(+) T-cells and to a lesser extent by CD8(+) T-cells. Plays a role in preparing T-cells for cytokine sensing and differentiation into effector cells by inducing the expression of cytokine receptors IFNGR and IL4R, promoting IFNGR and IL4R signaling and by mediating the clustering of IFNGR with TCR. Acts as a major E-selectin ligand responsible for Th17 cell rolling on activated vasculature and recruitment during inflammation. Mediates Th17 cells, but not Th1 cells, adhesion to E-selectin. Acts as a T-cell counter-receptor for SIGLEC1. Functionally, protects cells from apoptotic signals, promoting cell survival. The polypeptide is Leukosialin (Spn) (Rattus norvegicus (Rat)).